We begin with the raw amino-acid sequence, 554 residues long: Malate synthase 2 (554 aa).

The Proton acceptor role is filled by Arg177. Asp457 serves as the catalytic Proton donor. The SKL peroxisome targeting motif motif lies at 552–554 (SKL).

The protein belongs to the malate synthase family. As to quaternary structure, interacts with PEX9.

It localises to the peroxisome matrix. The catalysed reaction is glyoxylate + acetyl-CoA + H2O = (S)-malate + CoA + H(+). In terms of biological role, allantoin metabolism-specific malate synthase involved in the recycling the glyoxylate generated during allantoin degradation by the ureidoglycollate (UG) hydrolase reaction. The protein is Malate synthase 2 of Saccharomyces cerevisiae (strain ATCC 204508 / S288c) (Baker's yeast).